The following is a 109-amino-acid chain: Large ribosomal subunit protein uL22 (109 aa).

This sequence belongs to the universal ribosomal protein uL22 family. As to quaternary structure, part of the 50S ribosomal subunit.

This protein binds specifically to 23S rRNA; its binding is stimulated by other ribosomal proteins, e.g. L4, L17, and L20. It is important during the early stages of 50S assembly. It makes multiple contacts with different domains of the 23S rRNA in the assembled 50S subunit and ribosome. Functionally, the globular domain of the protein is located near the polypeptide exit tunnel on the outside of the subunit, while an extended beta-hairpin is found that lines the wall of the exit tunnel in the center of the 70S ribosome. This is Large ribosomal subunit protein uL22 from Dehalococcoides mccartyi (strain ATCC BAA-2266 / KCTC 15142 / 195) (Dehalococcoides ethenogenes (strain 195)).